The primary structure comprises 1342 residues: DNA-directed RNA polymerase subunit beta (1342 aa).

This sequence belongs to the RNA polymerase beta chain family. The RNAP catalytic core consists of 2 alpha, 1 beta, 1 beta' and 1 omega subunit. When a sigma factor is associated with the core the holoenzyme is formed, which can initiate transcription.

The catalysed reaction is RNA(n) + a ribonucleoside 5'-triphosphate = RNA(n+1) + diphosphate. Functionally, DNA-dependent RNA polymerase catalyzes the transcription of DNA into RNA using the four ribonucleoside triphosphates as substrates. The chain is DNA-directed RNA polymerase subunit beta from Aeromonas hydrophila subsp. hydrophila (strain ATCC 7966 / DSM 30187 / BCRC 13018 / CCUG 14551 / JCM 1027 / KCTC 2358 / NCIMB 9240 / NCTC 8049).